Reading from the N-terminus, the 395-residue chain is Elongation factor Tu (395 aa).

The tr-type G domain maps to 10-204 (KPHVNIGTIG…EVDAYIPTPE (195 aa)). The segment at 19–26 (GHVDHGKT) is G1. 19 to 26 (GHVDHGKT) is a binding site for GTP. A Mg(2+)-binding site is contributed by threonine 26. Residues 60-64 (GITIS) are G2. The interval 81-84 (DCPG) is G3. GTP-binding positions include 81–85 (DCPGH) and 136–139 (NKCD). Residues 136-139 (NKCD) are G4. The tract at residues 174-176 (SAL) is G5.

It belongs to the TRAFAC class translation factor GTPase superfamily. Classic translation factor GTPase family. EF-Tu/EF-1A subfamily. As to quaternary structure, monomer.

The protein localises to the cytoplasm. The catalysed reaction is GTP + H2O = GDP + phosphate + H(+). Functionally, GTP hydrolase that promotes the GTP-dependent binding of aminoacyl-tRNA to the A-site of ribosomes during protein biosynthesis. The sequence is that of Elongation factor Tu from Bacillus anthracis (strain A0248).